Reading from the N-terminus, the 130-residue chain is Small ribosomal subunit protein uS9 (130 aa).

The protein belongs to the universal ribosomal protein uS9 family.

This Yersinia pseudotuberculosis serotype O:1b (strain IP 31758) protein is Small ribosomal subunit protein uS9.